Consider the following 162-residue polypeptide: UPF0178 protein RSKD131_2223 (162 aa).

Belongs to the UPF0178 family.

The chain is UPF0178 protein RSKD131_2223 from Cereibacter sphaeroides (strain KD131 / KCTC 12085) (Rhodobacter sphaeroides).